Reading from the N-terminus, the 128-residue chain is NHP2-like protein 1 (128 aa).

The segment at 36–48 (RKGANEATKTLNR) is interaction with U4 snRNA and U4atac snRNA. Positions 96–128 (SRPVIACAVTIKEGSQLKPQIQSLQQSIERLLV) are important for U4 snRNA-binding.

Belongs to the eukaryotic ribosomal protein eL8 family. Identified in the spliceosome B complex. Component of the U4/U6-U5 tri-snRNP complex. Part of the small subunit (SSU) processome, composed of more than 70 proteins and the RNA chaperone small nucleolar RNA (snoRNA) U3.

Its subcellular location is the nucleus. The protein localises to the nucleolus. In terms of biological role, part of the small subunit (SSU) processome, first precursor of the small eukaryotic ribosomal subunit. During the assembly of the SSU processome in the nucleolus, many ribosome biogenesis factors, an RNA chaperone and ribosomal proteins associate with the nascent pre-rRNA and work in concert to generate RNA folding, modifications, rearrangements and cleavage as well as targeted degradation of pre-ribosomal RNA by the RNA exosome. Involved in pre-mRNA splicing as component of the spliceosome. Binds to the 5'-stem-loop of U4 snRNA and thereby contributes to spliceosome assembly. The protein undergoes a conformational change upon RNA-binding. Core component of box C/D small nucleolar ribonucleoprotein (snoRNP) complexes that function in methylation of multiple sites on ribosomal RNAs (rRNAs) and messenger RNAs (mRNAs). The polypeptide is NHP2-like protein 1 (Xenopus tropicalis (Western clawed frog)).